The sequence spans 216 residues: MTDLPILHVKNLGKADYQPVWQAMKDFTDGRDAHTPDELWLVEHPPVFTQGQAGKAEHLLAPGAIPVVATDRGGQVTYHGPGQLVAYPLLDLRRLKIGVRELVTKIEQSVVALLAEYKIDSAPKADAPGVYVNGDKIASLGLRVRKGCSFHGVAINVDVDLAPFNQINPCGYAGLNMTRLVDLVDTTKQPVVFSDVAKRYTRILSNILGLTAQLKE.

Positions 33–212 constitute a BPL/LPL catalytic domain; that stretch reads AHTPDELWLV…ILSNILGLTA (180 aa). Residues 72–79, 139–141, and 152–154 contribute to the substrate site; these read RGGQVTYH, SLG, and GVA. The active-site Acyl-thioester intermediate is Cys170.

It belongs to the LipB family.

It is found in the cytoplasm. The catalysed reaction is octanoyl-[ACP] + L-lysyl-[protein] = N(6)-octanoyl-L-lysyl-[protein] + holo-[ACP] + H(+). The protein operates within protein modification; protein lipoylation via endogenous pathway; protein N(6)-(lipoyl)lysine from octanoyl-[acyl-carrier-protein]: step 1/2. Functionally, catalyzes the transfer of endogenously produced octanoic acid from octanoyl-acyl-carrier-protein onto the lipoyl domains of lipoate-dependent enzymes. Lipoyl-ACP can also act as a substrate although octanoyl-ACP is likely to be the physiological substrate. The chain is Octanoyltransferase from Saccharophagus degradans (strain 2-40 / ATCC 43961 / DSM 17024).